We begin with the raw amino-acid sequence, 132 residues long: Large ribosomal subunit protein eL8 (132 aa).

K8 is modified (N6-acetyllysine; alternate). K8 participates in a covalent cross-link: Glycyl lysine isopeptide (Lys-Gly) (interchain with G-Cter in SUMO2); alternate. A Glycyl lysine isopeptide (Lys-Gly) (interchain with G-Cter in SUMO2) cross-link involves residue K36. K128 is modified (N6-acetyllysine).

Belongs to the eukaryotic ribosomal protein eL8 family. Component of the large ribosomal subunit. Interacts with CRY1. Interacts with DICER1, AGO2, TARBP2, MOV10 and EIF6; they form a large RNA-induced silencing complex (RISC).

It localises to the cytoplasm. Its function is as follows. Component of the large ribosomal subunit. The ribosome is a large ribonucleoprotein complex responsible for the synthesis of proteins in the cell. In Sus scrofa (Pig), this protein is Large ribosomal subunit protein eL8 (RPL7A).